The primary structure comprises 2144 residues: Polyketide synthase-like protein Preu9 (2144 aa).

Residues 1–250 form the Ketosynthase family 3 (KS3) domain; that stretch reads MYALHLAVNA…GANAHCIIDH (250 aa). The interval 276–325 is disordered; it reads QNGHLNEFAANGTTNAPSRDHRNGITDGRADGNTNGHPNANGDVGGNPIN. A compositionally biased stretch (basic and acidic residues) spans 293 to 305; that stretch reads SRDHRNGITDGRA. The tract at residues 435–738 is malonyl-CoA:ACP transacylase (MAT); it reads FVFTGQGAQW…KSPVEQILKS (304 aa). An N-terminal hotdog fold region spans residues 827 to 965; it reads HDLLGSKVVG…GCVKLIIKSS (139 aa). The interval 827–1137 is dehydratase (DH) domain; that stretch reads HDLLGSKVVG…ERLRCVSYSR (311 aa). In terms of domain architecture, PKS/mFAS DH spans 827-1141; it reads HDLLGSKVVG…CVSYSRISSD (315 aa). Catalysis depends on His859, which acts as the Proton acceptor; for dehydratase activity. The segment at 979–1141 is C-terminal hotdog fold; that stretch reads TLRPVDVRAW…CVSYSRISSD (163 aa). Catalysis depends on Asp1050, which acts as the Proton donor; for dehydratase activity. The methyltransferase (MT) domain stretch occupies residues 1305-1494; that stretch reads TGIYPQLHRI…GLDVVLDDFP (190 aa). Positions 1731–2042 are enoyl reductase (ER) domain; sequence GVPNSLCFAS…LANMIGKLVV (312 aa).

Functionally, polyketide synthase-like protein that lacks important domains such as carrier domain and does probably not function as a polyketide synthase. In Preussia isomera (Coprophilous fungus), this protein is Polyketide synthase-like protein Preu9.